Reading from the N-terminus, the 203-residue chain is Akirin-2 (203 aa).

S18 and S21 each carry phosphoserine. The Nuclear localization signal motif lies at 22–27 (PKRRRC). S57 is subject to Phosphoserine. The short motif at 200-203 (SYVS) is the SYVS motif element.

Belongs to the akirin family. In terms of assembly, homodimer. Interacts with IPO9; the interaction is direct. Associates with 20S and 26S proteasomes. Interacts with SMARCD1; promoting SWI/SNF complex recruitment. Interacts with NFKBIZ. Interacts with YWHAB. Post-translationally, polyubiquitinated. Polyubiquitination is dependent of UBR5 that extends pre-ubiquitinated AKIRIN2. Widely expressed. Most abundant in the lung, followed by the skeletal muscle, heart, liver, fat, thymus, lymph node, small intestine, kidney and spleen. In skeletal muscle, expressed at higher level in fast extensor digitorum longus (EDL) and longissimus lumborum (LL) muscles than in slow soleus (SOL) muscles.

It is found in the nucleus. The protein resides in the cytoplasm. The protein localises to the membrane. Functionally, molecular adapter that acts as a bridge between a variety of multiprotein complexes, and which is involved in embryonic development, immunity, myogenesis and brain development. Plays a key role in nuclear protein degradation by promoting import of proteasomes into the nucleus: directly binds to fully assembled 20S proteasomes at one end and to nuclear import receptor IPO9 at the other end, bridging them together and mediating the import of pre-assembled proteasome complexes through the nuclear pore. Involved in innate immunity by regulating the production of interleukin-6 (IL6) downstream of Toll-like receptor (TLR): acts by bridging the NF-kappa-B inhibitor NFKBIZ and the SWI/SNF complex, leading to promote induction of IL6. Also involved in adaptive immunity by promoting B-cell activation. Involved in brain development: required for the survival and proliferation of cerebral cortical progenitor cells. Involved in myogenesis: required for skeletal muscle formation and skeletal development, possibly by regulating expression of muscle differentiation factors. The chain is Akirin-2 from Sus scrofa (Pig).